The sequence spans 378 residues: Ribosomal RNA large subunit methyltransferase G (378 aa).

This sequence belongs to the methyltransferase superfamily. RlmG family.

Its subcellular location is the cytoplasm. It catalyses the reaction guanosine(1835) in 23S rRNA + S-adenosyl-L-methionine = N(2)-methylguanosine(1835) in 23S rRNA + S-adenosyl-L-homocysteine + H(+). Its function is as follows. Specifically methylates the guanine in position 1835 (m2G1835) of 23S rRNA. The protein is Ribosomal RNA large subunit methyltransferase G of Salmonella dublin (strain CT_02021853).